The chain runs to 392 residues: S-adenosylmethionine synthase (392 aa).

Residue H17 coordinates ATP. Position 19 (D19) interacts with Mg(2+). E45 contributes to the K(+) binding site. 2 residues coordinate L-methionine: E58 and Q102. The interval 102-112 (QSADIAQGVDA) is flexible loop. ATP is bound by residues 169 to 171 (DAK), 235 to 236 (KF), D244, 250 to 251 (RK), A267, and K271. D244 contacts L-methionine. K275 serves as a coordination point for L-methionine.

The protein belongs to the AdoMet synthase family. As to quaternary structure, homotetramer; dimer of dimers. Requires Mg(2+) as cofactor. K(+) is required as a cofactor.

The protein localises to the cytoplasm. The catalysed reaction is L-methionine + ATP + H2O = S-adenosyl-L-methionine + phosphate + diphosphate. It functions in the pathway amino-acid biosynthesis; S-adenosyl-L-methionine biosynthesis; S-adenosyl-L-methionine from L-methionine: step 1/1. Its function is as follows. Catalyzes the formation of S-adenosylmethionine (AdoMet) from methionine and ATP. The overall synthetic reaction is composed of two sequential steps, AdoMet formation and the subsequent tripolyphosphate hydrolysis which occurs prior to release of AdoMet from the enzyme. In Methylobacterium sp. (strain 4-46), this protein is S-adenosylmethionine synthase.